A 288-amino-acid chain; its full sequence is Acetyl-coenzyme A carboxylase carboxyl transferase subunit beta (288 aa).

Residues 34–288 (LFAKCPACKH…HLVAFHGGGQ (255 aa)) enclose the CoA carboxyltransferase N-terminal domain. Zn(2+)-binding residues include Cys38, Cys41, Cys56, and Cys59. The segment at 38 to 59 (CPACKHMIYKKDLGLAKICPTC) adopts a C4-type zinc-finger fold.

This sequence belongs to the AccD/PCCB family. As to quaternary structure, acetyl-CoA carboxylase is a heterohexamer composed of biotin carboxyl carrier protein (AccB), biotin carboxylase (AccC) and two subunits each of ACCase subunit alpha (AccA) and ACCase subunit beta (AccD). The cofactor is Zn(2+).

It is found in the cytoplasm. The enzyme catalyses N(6)-carboxybiotinyl-L-lysyl-[protein] + acetyl-CoA = N(6)-biotinyl-L-lysyl-[protein] + malonyl-CoA. Its pathway is lipid metabolism; malonyl-CoA biosynthesis; malonyl-CoA from acetyl-CoA: step 1/1. Component of the acetyl coenzyme A carboxylase (ACC) complex. Biotin carboxylase (BC) catalyzes the carboxylation of biotin on its carrier protein (BCCP) and then the CO(2) group is transferred by the transcarboxylase to acetyl-CoA to form malonyl-CoA. In Streptococcus pyogenes serotype M4 (strain MGAS10750), this protein is Acetyl-coenzyme A carboxylase carboxyl transferase subunit beta.